The chain runs to 375 residues: 23S rRNA (uracil(747)-C(5))-methyltransferase RlmC (375 aa).

Residues Cys-3, Cys-11, Cys-14, and Cys-87 each contribute to the [4Fe-4S] cluster site. Gln-212, Phe-241, Glu-262, and Asn-307 together coordinate S-adenosyl-L-methionine. Cys-334 serves as the catalytic Nucleophile.

Belongs to the class I-like SAM-binding methyltransferase superfamily. RNA M5U methyltransferase family. RlmC subfamily.

It catalyses the reaction uridine(747) in 23S rRNA + S-adenosyl-L-methionine = 5-methyluridine(747) in 23S rRNA + S-adenosyl-L-homocysteine + H(+). Functionally, catalyzes the formation of 5-methyl-uridine at position 747 (m5U747) in 23S rRNA. This is 23S rRNA (uracil(747)-C(5))-methyltransferase RlmC from Escherichia fergusonii (strain ATCC 35469 / DSM 13698 / CCUG 18766 / IAM 14443 / JCM 21226 / LMG 7866 / NBRC 102419 / NCTC 12128 / CDC 0568-73).